Reading from the N-terminus, the 450-residue chain is Trigger factor (450 aa).

Residues 163-249 (EDFVLIDYQG…LKEIQEQILP (87 aa)) form the PPIase FKBP-type domain. Residues 431–443 (PEVETEVSESAAD) show a composition bias toward acidic residues. The tract at residues 431–450 (PEVETEVSESAADVEDKTDQ) is disordered.

It belongs to the FKBP-type PPIase family. Tig subfamily.

It is found in the cytoplasm. The enzyme catalyses [protein]-peptidylproline (omega=180) = [protein]-peptidylproline (omega=0). In terms of biological role, involved in protein export. Acts as a chaperone by maintaining the newly synthesized protein in an open conformation. Functions as a peptidyl-prolyl cis-trans isomerase. This is Trigger factor from Desulforapulum autotrophicum (strain ATCC 43914 / DSM 3382 / VKM B-1955 / HRM2) (Desulfobacterium autotrophicum).